We begin with the raw amino-acid sequence, 368 residues long: MKFQVISQDKEARHGMFNFNGNIIETPVFMPVGTYGTVKSLNIEEIKNTGSKIILSNALHLYLRPGQDIIKLHGSLHNFMNWNGPILTDSGGFQIFSLSNFCRIKEEGVIFKNHINGKKFFLTPELSMEIQIDLGSNIIMIFDECIAYNKDWEKTKFAMERSLNWSRRSRIHFDLKKKNKKNLLFGIIHGGSYKSLRDISLKELIKMDFDGYALGGLAVGESKLEMHDLLDHITPQIPKKKPRYLMGVGKPEDLIESVYRGIDMFDCVLPTRNARNGHLFVTNGIIKIRNAKYKKDLSVLDKKCTCYTCQNYSRSYLHHLDSCNEILGARLNTIHNLHYYQTLMFNIRNAIKQKKFDEFVSNFYNQKK.

D89 acts as the Proton acceptor in catalysis. Residues 89-93 (DSGGF), D143, and G216 contribute to the substrate site. The segment at 247–253 (GVGKPED) is RNA binding. Residue D266 is the Nucleophile of the active site. The RNA binding; important for wobble base 34 recognition stretch occupies residues 271–275 (TRNAR). 4 residues coordinate Zn(2+): C304, C306, C309, and H335.

The protein belongs to the queuine tRNA-ribosyltransferase family. Homodimer. Within each dimer, one monomer is responsible for RNA recognition and catalysis, while the other monomer binds to the replacement base PreQ1. The cofactor is Zn(2+).

It catalyses the reaction 7-aminomethyl-7-carbaguanine + guanosine(34) in tRNA = 7-aminomethyl-7-carbaguanosine(34) in tRNA + guanine. It functions in the pathway tRNA modification; tRNA-queuosine biosynthesis. Catalyzes the base-exchange of a guanine (G) residue with the queuine precursor 7-aminomethyl-7-deazaguanine (PreQ1) at position 34 (anticodon wobble position) in tRNAs with GU(N) anticodons (tRNA-Asp, -Asn, -His and -Tyr). Catalysis occurs through a double-displacement mechanism. The nucleophile active site attacks the C1' of nucleotide 34 to detach the guanine base from the RNA, forming a covalent enzyme-RNA intermediate. The proton acceptor active site deprotonates the incoming PreQ1, allowing a nucleophilic attack on the C1' of the ribose to form the product. After dissociation, two additional enzymatic reactions on the tRNA convert PreQ1 to queuine (Q), resulting in the hypermodified nucleoside queuosine (7-(((4,5-cis-dihydroxy-2-cyclopenten-1-yl)amino)methyl)-7-deazaguanosine). The protein is Queuine tRNA-ribosyltransferase of Buchnera aphidicola subsp. Schizaphis graminum (strain Sg).